The following is a 509-amino-acid chain: Meiotic fizzy-related protein 2 (509 aa).

WD repeat units lie at residues 159-196, 199-238, 242-281, 287-326, 329-371, and 437-477; these read LDDF…SIME, PTTY…NRCD, HHDG…MRRV, VHQE…NKKF, IHLA…RIHS, and IHTH…QEIH.

It belongs to the WD repeat CDC20/Fizzy family.

It localises to the nucleus. Functionally, has a role in meiosis. This Schizosaccharomyces pombe (strain 972 / ATCC 24843) (Fission yeast) protein is Meiotic fizzy-related protein 2 (mfr2).